Consider the following 441-residue polypeptide: Cysteine--tRNA ligase (441 aa).

Zn(2+) is bound at residue C24. Positions 26–36 match the 'HIGH' region motif; that stretch reads PTVYNYIHIGN. 3 residues coordinate Zn(2+): C204, H230, and E234. Positions 262 to 266 match the 'KMSKS' region motif; sequence KMSKS. Residue K265 participates in ATP binding.

The protein belongs to the class-I aminoacyl-tRNA synthetase family. In terms of assembly, monomer. Requires Zn(2+) as cofactor.

The protein resides in the cytoplasm. It carries out the reaction tRNA(Cys) + L-cysteine + ATP = L-cysteinyl-tRNA(Cys) + AMP + diphosphate. This Mycoplasma capricolum subsp. capricolum (strain California kid / ATCC 27343 / NCTC 10154) protein is Cysteine--tRNA ligase.